The sequence spans 1118 residues: cGMP-specific 3',5'-cyclic phosphodiesterase (1118 aa).

The interval 1–142 is disordered; that stretch reads MTDVSSPAGG…KASTTASQQD (142 aa). The span at 18-33 shows a compositional bias: low complexity; that stretch reads STTSSSSAATTSASSS. The span at 34–45 shows a compositional bias: polar residues; that stretch reads KPLTNGANKTAI. Composition is skewed to low complexity over residues 46–56 and 63–72; these read STAAGGVTPGA and GAIPASSSSG. Over residues 84–101 the composition is skewed to polar residues; the sequence is SNNNRPAVTNRSSETKLM. Low complexity predominate over residues 102-128; the sequence is TPTGSSSSPSQSPSQTQASIQTQTSQQ. 2 consecutive GAF domains span residues 247–399 and 431–612; these read DIDV…GIGI and NLEC…GLGI. The 324-residue stretch at 642-965 folds into the PDEase domain; sequence SQDQTEKLTQ…RNWQDLAEKV (324 aa). His-718 acts as the Proton donor in catalysis. The a divalent metal cation site is built by His-722, His-758, Asp-759, and Asp-869. Disordered stretches follow at residues 1006–1035 and 1065–1118; these read QQSQHGSEDSHTPEHQRSGSRLSMKKTGAL and SHVS…CALL. Basic and acidic residues-rich tracts occupy residues 1011 to 1022 and 1065 to 1075; these read GSEDSHTPEHQR and SHVSEDMDDKS. The span at 1084–1104 shows a compositional bias: low complexity; it reads ASGSMGRMSASSSTSSAGGQM. The segment covering 1108–1118 has biased composition (basic residues); the sequence is SKKRSKLCALL. Residue Cys-1115 is modified to Cysteine methyl ester. Cys-1115 carries S-farnesyl cysteine lipidation. Residues 1116-1118 constitute a propeptide, removed in mature form; it reads ALL.

Belongs to the cyclic nucleotide phosphodiesterase family. As to quaternary structure, interacts with PrBP. A divalent metal cation is required as a cofactor. In terms of tissue distribution, expressed in Malpighian tubule principal cells. Also expressed in adult head.

Its subcellular location is the cell membrane. It carries out the reaction 3',5'-cyclic GMP + H2O = GMP + H(+). Inhibited by sildenafil and zaprinast. In terms of biological role, hydrolyzes the second messenger cGMP, which is a key regulator of many important physiological processes. Has cAMP phosphodiesterase activity in vitro but not in vivo. Has a role regulating cGMP transport in Malpighian tubule principal cells. The chain is cGMP-specific 3',5'-cyclic phosphodiesterase (Pde6) from Drosophila melanogaster (Fruit fly).